The sequence spans 319 residues: tRNA uridine(34) hydroxylase (319 aa).

The region spanning 127-221 (KQEDTVIIDA…YGKDPEVQGE (95 aa)) is the Rhodanese domain. Cys181 serves as the catalytic Cysteine persulfide intermediate.

It belongs to the TrhO family.

It carries out the reaction uridine(34) in tRNA + AH2 + O2 = 5-hydroxyuridine(34) in tRNA + A + H2O. In terms of biological role, catalyzes oxygen-dependent 5-hydroxyuridine (ho5U) modification at position 34 in tRNAs. The sequence is that of tRNA uridine(34) hydroxylase from Bacillus cereus (strain B4264).